The sequence spans 308 residues: MTSKLEQLKQFTTVVADTGDLDAITRLKPVDATTNPSLLLKAAAIPGYADLLKQVKADAKGDVDLACDKFAVAVGSGILKVIPGRISTEVDARLSFDEPALLNKARQLIALYEAAGVPKDRVLIKLASTWEGIRAAEKLEKEGIQTNLTLLFSFAQAQACADAGVFLISPFVGRIYDWYKKSTGKDYVGAEDPGVQSVTRIYNYYKANGYNTVVMGASFRNIGQIEQLAGCDRLTISPELLQQLSDDQGELPQVLKPGNAGEAKQPLNESQFRWAMNEDAMGTEKLAEGIRQFARDQEKLEKLMAEKA.

Lys-125 functions as the Schiff-base intermediate with substrate in the catalytic mechanism.

The protein belongs to the transaldolase family. Type 1 subfamily. Homodimer.

The protein resides in the cytoplasm. The catalysed reaction is D-sedoheptulose 7-phosphate + D-glyceraldehyde 3-phosphate = D-erythrose 4-phosphate + beta-D-fructose 6-phosphate. Its pathway is carbohydrate degradation; pentose phosphate pathway; D-glyceraldehyde 3-phosphate and beta-D-fructose 6-phosphate from D-ribose 5-phosphate and D-xylulose 5-phosphate (non-oxidative stage): step 2/3. In terms of biological role, transaldolase is important for the balance of metabolites in the pentose-phosphate pathway. This is Transaldolase from Pseudomonas putida (strain GB-1).